An 852-amino-acid chain; its full sequence is Lon protease homolog 2, peroxisomal (852 aa).

Position 2 is an N-acetylserine (S2). Positions L13 to I222 constitute a Lon N-terminal domain. G375 to T382 provides a ligand contact to ATP. Residues L651–G837 enclose the Lon proteolytic domain. Active-site residues include S743 and K786. The Microbody targeting signal motif lies at S850 to L852.

The protein belongs to the peptidase S16 family. In terms of assembly, interacts with PEX5. Interacts with TYSND1. May interact with enzymes involved in beta-oxidation of fatty acids, including ACOX1/AOX.

Its subcellular location is the peroxisome matrix. It catalyses the reaction Hydrolysis of proteins in presence of ATP.. In terms of biological role, ATP-dependent serine protease that mediates the selective degradation of misfolded and unassembled polypeptides in the peroxisomal matrix. Necessary for type 2 peroxisome targeting signal (PTS2)-containing protein processing and facilitates peroxisome matrix protein import. May indirectly regulate peroxisomal fatty acid beta-oxidation through degradation of the self-processed forms of TYSND1. This is Lon protease homolog 2, peroxisomal from Pongo abelii (Sumatran orangutan).